Reading from the N-terminus, the 175-residue chain is Inorganic pyrophosphatase (175 aa).

Substrate is bound by residues Lys-30, Arg-44, and Tyr-56. Mg(2+)-binding residues include Asp-66, Asp-71, and Asp-103. Residue Tyr-142 participates in substrate binding.

Belongs to the PPase family. In terms of assembly, homohexamer. Mg(2+) serves as cofactor.

The protein resides in the cytoplasm. The enzyme catalyses diphosphate + H2O = 2 phosphate + H(+). Functionally, catalyzes the hydrolysis of inorganic pyrophosphate (PPi) forming two phosphate ions. The polypeptide is Inorganic pyrophosphatase (Buchnera aphidicola subsp. Baizongia pistaciae (strain Bp)).